We begin with the raw amino-acid sequence, 3902 residues long: MGTADVYEQHKNQEEDMLTTERLKKGYQVPVTHYELQSLIFNASENKLLRLDRAPRRTYCMISSIVHRRGEYHMNFDSNRKVAKGEMPRFAKIRFKRILEDRVKFFSALFRGTPLQYLQKKVPYYRRKELLLLEFYDYQIRYDRAIWCVKLVSILGFNCSAKAQKKALLDLATLEWSQACGKVTYYLLLALRKTYKKSRAAFRESVKMWYYMTRFMMYMFQDGVVDKHEFLNDLTEMFNVFFIRGSLANAKILELFMEYYIFFLDDLSSSLILARRASSLLCKALGLLSEINEAYTKTQVYKNENKHEFMGHQDVWTIDAQPKFDFEDYNRDHKEFIDPDDFFRFVDELPDAAYFEDYEDKTAEQVAEEELQTMEAPRRARNYIYSALKSVKTPVNDQIPVDLGDELYIPSDVESLTSPEPEEDPEEGPEEDPRSQSVPSPTFPAGPVSMEEAIPAYWRARGPVLQTVPQPAPQPVPKPVQQTVPKPVPRPPPRNLNIKSEQVDPEYEKNFGNPVKSKNFNINIKAEPMDYDEYSTEPPQPLQPPQTFQQRPKSPEKEKAPEPAAEPPRWTLEELPKNFLSKNLEVPAPWTRPRENPIERKRAYNLLCAKRFPVKEDVFEPFKDPDSPDGSRPASPIEPIPVKKLHKTPPKKVMTDDDEFGHIPAQKRKINPKLANGKYSETLFVYYLINGGVAFDPKHDGDEMDFSNPTPPEAPPPPPPVEFETSPSASPAPDTDKEDEDGKSKEGGDKAAEKSTDKPAEEKEASEKEKTGEKKDGDKPTEEKSKKGEKADGKKAVDEHLNDLIIPMDVEAEAATKRNSATNSKDDEAEDANKVAGDAPVVEATHAAGTSEKKPEAEVTPIETNDVEMESVDPATNKESTSDSTAEKSSDSQEPMEVDDPQKKLPSPAADKAGDDASKKTKEGKKPDTPAIELVDLEALDDIPLPTDDLMLPEEDEIQVIEKPKHPDADFCEVVEVVEKDKDKTPEKATEGEKEAEKDAEKLPEPAPVVESVPEPVKTPEKPKTPEPPRLYTAEEIEQLKKDKRRQRMLDRLTDAFKIQMESDKKYEENNIHPSFKVYDQSRSFRRPLHLLSSMVQYLAFRTPESFVWNNLEVPRPDKCHKILPQLCGSPLDHLPCELHELPVMEGNDGHVEHLRLRHHEIVRRSQAADENWLPGGADVLQYGRIIDACVDVIGLMDCINVERPNSIFKVSERLFNFREKFAKEEALLRIKLMFKWCISEEREGSFRPVYCARMLEYGLNRSDDGLIGGWQIMDLFFNFMATEGPKPGMANYQAKFDACAGIMIEMIRHKLFTVADILRELEKDLDIDYTLPLMARQRKQKMPKISKKEKTPEEPDNTKLIHFTTEHTPKRLFMGRKMDLLERMIIMLPQFGNNKDSDEYKIRNQLLFGLRPSENIYFRRAKTICQGICKEFDSKSYIEFNDYVTAHKKLNQSRLDDILRQFRAQTYHDQHVILEKIVIHLTENIGSFLEKKNGHLPAPEVVNIICEMYEYSMDITSIFDFFEVLHPYLKAVDEKVASFEMDLVPDMYHTEIAYIFVSFFMKHYQRFLLHKRNNHIVNQLYYSVRKMMMDKTRFITCWGRVIAIFVNHIRPVLIDGCFRIIHIEGNEREFARAHPNKRPFNLECSYFNEEFAGSKLSLRGATMRYDSFADMKWIVDNLKVTVKRKNSKPRTPNRYSFVIRAFMEARKHGQNFDRINELANYCANVTANDPPLSEYWIGAIKGLCCLCIDDSSQLFKEMAKKIDISDCSTHYSLSTFITCLAGKAAFYIPRLLHKLTEEVFSQMLHNDGRLTSHKTKDVKRKSANKTTETRTLSEAEPGVCLSLLIIAGLCCPGDEPFGLSVHYRGIEKKKKRFRQTADERIMHMFHWLEMDKSMFRTLASISKLLEALQSRCRDANLVLPQSFQLKHPIVDPNHPPPHEKAPYRPQFLFNIAKAVFFTICEQDWVTIRMYQFVRINKMEPFNQEKLKTNCLGQQLLRISLRRKTERSNVHSLFEAHKISKKATVDKVLSFMNLWNFRATLFDLMLMIKEISPDGNTRHAQQGAIAADALMSEIGKCCRDMFLAAYKADAKMPNVKKLMDFRFGDISKYWLLAPLVRMCPKPINIPPQYANTQVQTVAAKFLREASALMDTPPTTTPKERLLQCSWAMSKLPFINMILTCLACEKTQSGKDTFLNSVYQQLQREVFRDHNKRSNWTNRPEHRDCTVLRVNLIAYMYKEILKPTHVEVWGLLLYQLMFHGIINPSRERYVFENCYDMLQHMVLWTLVNGDNMNSHDRYGSIRVRWPNYAGLMKKIRKEIQDRHVHPSRTCLLRFLPIGKLQTSTISYKKYHKRTIRPSATKSKKFMSNEGIRSGKYVYLPEEKVKTNAYDHMKNIPDGIQKGGWKFRMFQTTRLDKVAKSALHQLRAKIPHTHIGEFKRPCNIMLDNMSEDFYLRPPEVEITKTVEPVADDEETAAVKKPEEETAEKKKDEAKKADEKTTKADDEKKKDETADAKKDNEKQKEEKDKPEDSAKAKTDDVTAKDTEKDTAAPTDAAKAAAAPVAAAPDANKEMDTSTPKPAPVTRETSTTRGRGGGRKRNSGGRAAGGSRAKRTNSRANANAETAAAAETSSTTKAGPSGGGSSNYHAAMRANQPPMSNGSSDETKANIRNLLNRKQEKRNSLADANAAAAVAAAAAAAAAAAGNIAPALAPIVQPGIPSAGASSTMPGVPPQQQPHPGMQHQSGMQHQGMGAGMGGMNPTMHAPPPYSSSSMNPFANQPHFAAPNQVPITNMAHRSTAAVTPEERKRIMEEQMHQKLAQQQLLIENQNRQREAREREAREHQERLHKIREEQMQKEAKIREEQMQLERQRAIEENNRIMEEQRILREKEEARRRMEEEQRRREEEARLAYHVEQERIRKEQERQAILEAERLKREEERERERQRLEQERLQREMEEKARREKEEQARIERERLERERVAREALAAQQAQQAQQAQQAQQAQQQRHRAMLEQQQRQQMINQQQQQQAPYGQQPPQGQPPSYQQSSYQNPSGYQQGQQSGQNQPPNYQQTSHTNPAIQQTQQPPAYQQDNAQMHMQNRQQQPGQQYGNQPQQQQSQQAQQGQYPQQYPQQLSQNQQMNQQNQQRNPFGAQPEMQIGGPKVLMQAKPDEAHAQQYQHTQAQLALSQMEKEKQYLKAKNLQAGQAAGQQQPRFGENPQQNAPGFNGNLPYPQQQQQQPQQPGTSQIPNTTPTRPANPMQGQQQQAGMQNYQNQPVLGQPGPMQPGGQAGQQQQNQFQRQGMHTTPTKNDMAMRQGQMGGQMGQQQGQMGQQMQNRPAQGLNQQSQGFQQQGGQQSAQASFNQPQNQFSGGQQQQQMGQNQGQNLQQGQNQFGRQAAPNQENFQQQPGFNQNAAGQNYQRPEQQQQSQNQWNQLNQQMRPQQPQQPSQQQQNLPFGRTEQSQQFQQQQQQPQHQQQNKPAMGQQGFNYQGQQQGQGFDQSSQQTQQHPNPHQQQGHMQQTHQQNASQQQQQYNQAQQQSQQQGNQFPGFSGSSNQARASNILNQSMEDAGLNQGFSSGNTSNQQASSTNQQGNYGMQQGQQNPMHGQMHHQQGQQNQNQQQRPGMGQQGMGQQGMGQQGGMGQSGRGQPGMGGQSAMGQHQHGMGRPTMGQPGMQQSGMQQQHGMQQQQPGAQQSGLQQAGMQQQHGGIGMGGMQQQGRNNYGSMGQQGQQSGQQQAQQHQQMSQQAQPRQMPGGGVQLPPYSMGQQQQTQQQQPNQQQMDHLRRQQQMQQMARQQAMQQQQQGGVQQGQPQMQGYGNQGQQQQQQFPQMQQHRGQGQQGHGMGGAGQQHQQVPQQQQNQYFQPQQQQDQRMQQQPGGQQQQQQGQSGQQQNNQHYNNMGQFPNQQQY.

10 disordered regions span residues 414–576, 619–674, 694–940, 977–1029, 1812–1831, 2463–2675, 2719–2771, 2876–3151, 3195–3549, and 3563–3902; these read ESLT…EELP, FEPF…NPKL, AFDP…LEAL, VVEK…PEPP, TSHK…TETR, TVEP…NRKQ, AGAS…SSSM, RIME…PEMQ, LQAG…SSNQ, and AGLN…QQQY. Positions 420–430 are enriched in acidic residues; sequence EPEEDPEEGPE. The span at 709–721 shows a compositional bias: pro residues; that stretch reads PTPPEAPPPPPPV. Composition is skewed to basic and acidic residues over residues 740–802, 912–928, 977–1004, and 1018–1027; these read EDGK…EHLN, KAGD…KKPD, VVEK…EKLP, and KTPEKPKTPE. A compositionally biased stretch (basic residues) spans 1812-1824; sequence TSHKTKDVKRKSA. Residues 2409-3902 form a required for nuclear localization region; sequence QTTRLDKVAK…MGQFPNQQQY (1494 aa). The span at 2474-2547 shows a compositional bias: basic and acidic residues; it reads AAVKKPEEET…VTAKDTEKDT (74 aa). The stretch at 2480–2526 forms a coiled coil; it reads EEETAEKKKDEAKKADEKTTKADDEKKKDETADAKKDNEKQKEEKDK. 3 stretches are compositionally biased toward low complexity: residues 2548–2566, 2614–2632, and 2734–2748; these read AAPT…AAPD, SRAN…SSTT, and PHPG…QHQG. A compositionally biased stretch (basic and acidic residues) spans 2876–2979; the sequence is RIMEEQRILR…ERLERERVAR (104 aa). Composition is skewed to low complexity over residues 2980-3001, 3010-3143, 3196-3205, and 3226-3236; these read EALA…QAQQ, QQQR…QRNP, QAGQAAGQQQ, and PQQQQQQPQQP. The segment covering 3237 to 3248 has biased composition (polar residues); it reads GTSQIPNTTPTR. 3 stretches are compositionally biased toward low complexity: residues 3250 to 3275, 3284 to 3295, and 3317 to 3389; these read ANPM…GQPG, GQQQQNQFQRQG, and GQQQ…FGRQ. Positions 3391–3409 are enriched in polar residues; sequence APNQENFQQQPGFNQNAAG. Low complexity-rich tracts occupy residues 3410–3446, 3454–3539, and 3570–3619; these read QNYQ…QQQN, QSQQ…QGNQ, and SSGN…RPGM. Residues 3620-3649 show a composition bias toward gly residues; that stretch reads GQQGMGQQGMGQQGGMGQSGRGQPGMGGQS. 3 stretches are compositionally biased toward low complexity: residues 3663–3700, 3710–3742, and 3760–3830; these read MGQP…QQQH, QQGR…QQAQ, and QQQQ…HRGQ. Positions 3831–3841 are enriched in gly residues; that stretch reads GQQGHGMGGAG. Over residues 3842–3888 the composition is skewed to low complexity; the sequence is QQHQQVPQQQQNQYFQPQQQQDQRMQQQPGGQQQQQQGQSGQQQNNQ. Polar residues predominate over residues 3889–3902; that stretch reads HYNNMGQFPNQQQY.

It belongs to the Mediator complex subunit 12 family. Component of the Mediator complex.

The protein localises to the nucleus. Functionally, component of the Mediator complex, a coactivator involved in regulated gene transcription of nearly all RNA polymerase II-dependent genes. Mediator functions as a bridge to convey information from gene-specific regulatory proteins to the basal RNA polymerase II transcription machinery. Mediator is recruited to promoters by direct interactions with regulatory proteins and serves as a scaffold for the assembly of a functional preinitiation complex with RNA polymerase II and the general transcription factors. The polypeptide is Mediator of RNA polymerase II transcription subunit 12 (dpy-22) (Caenorhabditis briggsae).